We begin with the raw amino-acid sequence, 427 residues long: Glutamate-1-semialdehyde 2,1-aminomutase (427 aa).

N6-(pyridoxal phosphate)lysine is present on lysine 265.

It belongs to the class-III pyridoxal-phosphate-dependent aminotransferase family. HemL subfamily. In terms of assembly, homodimer. It depends on pyridoxal 5'-phosphate as a cofactor.

The protein localises to the cytoplasm. The catalysed reaction is (S)-4-amino-5-oxopentanoate = 5-aminolevulinate. Its pathway is porphyrin-containing compound metabolism; protoporphyrin-IX biosynthesis; 5-aminolevulinate from L-glutamyl-tRNA(Glu): step 2/2. This is Glutamate-1-semialdehyde 2,1-aminomutase from Paraburkholderia phytofirmans (strain DSM 17436 / LMG 22146 / PsJN) (Burkholderia phytofirmans).